Consider the following 216-residue polypeptide: MVGHLHLQGMEDSLKEQGREGLLDSPDSGLPPSPSPSPPFYSLAPGILDARAGGAGASSEPPGPSEARAPPSQLPNPPASEMRPRMLPVFFGESIKVNPEPTHEIRCNSEVKYASEKHFQDKVFYAPVPTVTAYSETIVAAPNCTWRNYRSQLTLEPRPRALRFRSTTIIFPKHARSTFRTTLHCSLGRPSRWFTASVQLQLCQDPAPSLLGPATL.

The tract at residues 1–83 (MVGHLHLQGM…LPNPPASEMR (83 aa)) is disordered. A compositionally biased stretch (basic and acidic residues) spans 12 to 22 (DSLKEQGREGL). A compositionally biased stretch (pro residues) spans 29 to 39 (GLPPSPSPSPP). The segment covering 57–71 (ASSEPPGPSEARAPP) has biased composition (low complexity). The residue at position 163 (Arg163) is an Asymmetric dimethylarginine.

This sequence belongs to the Refilin family. Interacts with FLNA and FLNB.

The protein resides in the cytoplasm. Its subcellular location is the cytoskeleton. In terms of biological role, involved in the regulation of the perinuclear actin network and nuclear shape through interaction with filamins. Plays an essential role in actin cytoskeleton formation in developing cartilaginous cells. The sequence is that of Refilin-A from Homo sapiens (Human).